The primary structure comprises 812 residues: Collagen-like protein 5 (812 aa).

N-linked (GlcNAc...) asparagine; by host glycans are attached at residues asparagine 13 and asparagine 83. 3 Collagen-like domains span residues 69-128 (GASG…KGDD), 143-502 (GEKG…KGDN), and 506-565 (GETG…KGEA). The interval 71–568 (SGAQGVKGDP…PGIKGEAGTN (498 aa)) is disordered. Composition is skewed to basic and acidic residues over residues 88 to 112 (TKGEKGDKGDKGSKGDNGEKGEKGD), 121 to 435 (SKGD…ETGS), 444 to 523 (SKGD…KGIK), and 531 to 561 (VKGDKGSKGDKGDLGDTGIKGDKGEKGDPGI). The N-linked (GlcNAc...) asparagine; by host glycan is linked to asparagine 502. N-linked (GlcNAc...) asparagine; by host glycans are attached at residues asparagine 637, asparagine 658, and asparagine 667. The segment at 730–802 (GQARTNGAST…VSASGGRGGD (73 aa)) is disordered. Positions 752-765 (FGGGGGGASGFAKG) are enriched in gly residues.

In terms of processing, may be hydroxylated on lysine by the viral-encoded procollagen-lysine,2-oxoglutarate 5-dioxygenase.

Its subcellular location is the virion. In terms of biological role, may participate in the formation of a layer of cross-linked glycosylated fibrils at the viral surface thus giving it a hairy-like appearance. This chain is Collagen-like protein 5, found in Acanthamoeba polyphaga (Amoeba).